A 336-amino-acid chain; its full sequence is tRNA(Ile)-lysidine synthase (336 aa).

ATP is bound at residue 40–45 (SGGQDS).

The protein belongs to the tRNA(Ile)-lysidine synthase family.

The protein resides in the cytoplasm. The enzyme catalyses cytidine(34) in tRNA(Ile2) + L-lysine + ATP = lysidine(34) in tRNA(Ile2) + AMP + diphosphate + H(+). In terms of biological role, ligates lysine onto the cytidine present at position 34 of the AUA codon-specific tRNA(Ile) that contains the anticodon CAU, in an ATP-dependent manner. Cytidine is converted to lysidine, thus changing the amino acid specificity of the tRNA from methionine to isoleucine. The chain is tRNA(Ile)-lysidine synthase from Prochlorococcus marinus subsp. pastoris (strain CCMP1986 / NIES-2087 / MED4).